A 3953-amino-acid polypeptide reads, in one-letter code: MPGERPRGAPPPTMTGDLQPRQVASSPGHPSQPPLEDNTPATRTTKGAREAGGQAQAMELPEAQPRQARDGELKPPSLRGQAPSSTPGKRGSPQTPPGRSPLQAPSRLAGRAEGSPPQRYILGIASSRTKPTLDETPENPQLEAAQLPEVDTPQGPGTGAPLRPGLPRTEAQPAAEELGFHRCFQEPPSSFTSTNYTSPSATPRPPAPGPPQSRGTSPLQPGSYPEYQASGADSWPPAAENSFPGANFGVPPAEPEPIPKGSRPGGSPRGVSFQFPFPALHGASTKPFPADVAGHAFTNGPLVFAFHQPQGAWPEEAVGTGPAYPLPTQPAPSPLPCYQGQPGGLNRHSDLSGALSSPGAAHSAPRPFSDSLHKSLTKILPERPPSAQDGLGSTRGPPSSLPQRHFPGQAYRASGVDTSPGPPDTELAAPGPPPARLPQLWDPTAAPYPTPPGGPLAATRSMFFNGQPSPGQRLCLPQSAPLPWPQVLPTARPSPHGMEMLSRLPFPAGGPEWQGGSQGALGTAGKTPGPREKLPAVRSSQGGSPALFTYNGMTDPGAQPLFFGVAQPQVSPHGTPSLPPPRVVGASPSESPLPSPATNTAGSTCSSLSPMSSSPANPSSEESQLPGPLGPSAFFHPPTHPQETGSPFPSPEPPHSLPTHYQPEPAKAFPFPADGLGAEGAFQCLEETPFPHEGPEVGRGGLQGFPRAPPPYPTHHFSLSSASLDQLDVLLTCRQCDRNYSSLAAFLAHRQFCGLLLARAKDGHQRSPGPPGLPSPPAAPRVPADAHAGLLSHAKTFLLAGDAQAEGKDDPLRTGFLPSLAATPFPLPASDLDMEDDAKLDSLITEALNGMEYQSDNPEIDSSFIDVFADEEPSGPRGPSSGHPLKSKAGVTPESKAPPPLPAATPDPQTPRPGDRGCPARGRPKTRSLGLAPTEADAPSQGRQQRRGKQLKLFRKDLDSGGAAEGSGSGGGGRASGLRPRRNDGLGERPPPRPRRPRTQAPGSRADPAPRVPRAAALPEETRSSRRRRLPPRKDPRKRKARGGAWGKELILKIVQQKNRRHRRLGRRAGRCGSLAAGRPRPGAEDRRLREYDFASESEEDEQPPPRGPGFRGRRGRGEKRKEVELTQGPREDEPQKPRKAARQEAGGDGAPANPEEPGGSRPGPGRSPQARGPSRSLETGAAAREGGPKCADRPSVAPKDPLQVPTNTETSEETRPSLDFPQEAKEPETAEESAPDSTEFTEALRSPPAACAGEMGASPGLLIPEQPPPSRHDTGTPKPSGSLANTAPHGSSPTPGVGSLLGGPGGTQAPVSHNSKDPPARQPGEFLAPVANPSSTACPKPSVLSSKISSFGCDPAGFNRDPLGVPVAKKGPQPYSSPHSELFLGPKDLAGCFLEELHPKPSARDAPPASSSCLCQDGEDAGSLEPQLPRSPPGTAETEPGRAASPPTLESSSLFPDLPVDRFDPPLYGSLSANRDSGLPFACADPPQKTVPSDPPYPSFLLLEEVSPMLPSHFPDLSGGKVLSKTCPPERTVVPGAAPSLPGKGSGCSVALMSHLSEDELEIQKLVTELESQLQRSKDTRGAPRELAEAESVGRVELGTGTEPPSQRRTCQATVPHEDTFSAADLTRVGESTAHREGAESAVATVEAVQGRPGGTWPCPASFHPGHAALLPCAQEDLVSGAPFSPRGANFHFQPVQKAGASKTGLCQAEGDSRPPQDVCLPEPSKQPGPQLDAGSLAKCSPDQELSFPKNKEAASSQESEDSLRLLPCEQRGGFLPEPGTADQPHRGAPAPEAFGSPAVHLAPDLAFQGDGAPPLDATWPFGASPSHAAQGHSAGRAGGHLHPTAGRPGFEGNEFAPAGASSLTAPRGREAWLVPVPSPACVSNTHPSRRSQDPALSPPIRQLQLPGPGVAKSKDGILGLQELTPAAQSPPRVNPSGLEGGTVEGGKVACGPAQGSPGGVQVTTLPAVAGHQLGLEADGHWGLLGQAEKTQGQGTANQLQPENGVSPGGTDNHASVNASPKTALTGPTEGAVLLEKCKGSRAAMSLQEEAEPTPSPPSPNRESLALALTAAHSRSGSEGRTPERASSPGLNKPLLATGDSPAPSVGDLAACAPSPTSAAHMPCSLGPLPREDPLTSPSRAQGGLGGQLPASPSCRDPPGPQQLLACSPAWAPLEEADGVQATTDTGAEDSPVAPPSLTTSPCDPKEALAGCLLQGEGSPLEDPSSWPPGSVSAVTCTHSGDTPKDSTLRIPEDSRKEKLWESPGRATSPPLAGAVSPSVAVRATGLSSTPTGDEAQAGRGLPGPDPQSRGAPPHTNPDRMPRGHSSYSPSNTARLGHREGQAVTAVPTEPPTLQGAGPDSPACLEGEMGTSSKEPEDPGTPETGRSGATKMPRVTCPSTGLGLGRTTAPSSTASDFQSDSPQSHRNASHQTPQGDPLGPQDLKQRSRGYKKKPASTENGQWKGQAPHGPVTCEVCAASFRSGPGLSRHKARKHRPHPGAPAEPSPAALPAQQPLEPLAQKCQPPRKKSHRVSGKERPNHSRGDPSHVTQPPPAQGSKEVLRAPGSPHSQQLHPPSPTEHEVDVKTPASKPRPDQAREDELHPKQAEKREGRRWRREPTVDSPSHSEGKSNKKRGKLRGRRLREESILPVSADVISDGRGSRPSPAMASYAASPSHCLSVEGGPEADGEQPPRLATLGPGVMEGAAETDQEALCAGETGAQKPPGDRMLCPGRMDGAALGEQPTGQKGASARGFWGPRETKALGVCKESGSEPAEDSSRAHSRSEEGVWEENTPPLGPLGFPETSSSPADSTTSSCLQGLPDNPDTQGGVQGPEGPTPDASGSSAKDPPSLFDDEVSFSQLFPPGGRLTRKRNPHVYGKRCEKPVLPLPTQPSFEEGGDPTLGPARLPTDLSDSSSLCLCHEDPWEDEDPAGLPESFLLDGFLNSRVPGIDPWAPGLSLWALEPSREAGAEKLPSHCPEDDRPEAIPELHMVPAAWRGLEMPAPADDSSSSLGDVSPEPPSLERERCDGGLPGNTHLLPLRATDFEVLSTKFEMQDLCFLGPFEDPVGLPGPSFLDFEGTASSQGPQSRRTEEAAGAGRAQGRGRPAKGRRASYKCKVCFQRFRSLGELDLHKLAHTPAPPPTCYMCVERRFGSRELLRGHLQERHAQSKAGPWACGMCLKEVADVWMYNEHLREHAVRFARRGQARRSLGDLPGGLEGSSAVAHLLNSITEPAPKHHRGKRSAGKAAGSPGDPWGQEGEAKKDSPGERAKPRARSTPSNPDGAATPDSASATALADAGSPGPPRTTPSPSPDPWAGGEPLLQATPVHEACKDPSRDCHHCGKRFPKPFKLQRHLAVHSPQRVYLCPRCPRVYPEHGELLAHLGGAHGLLERPELQHTPLYACELCATVMRIIKKSFACSSCNYTFAKKEQFDRHMNKHLRGGRQPFAFRGVRRPGAPGQKARALEGTLPSKRRRVAMPGSAPGPGEDRPPPRGSSPILSEGSLPALLHLCSEVAPSTTKGWPETLERPVDPVTHPIRGCELPSNHQECPPPSLSPFPAALADGRGDCALDGALERPENEASPGSPGPLLQQALPLGASLPRPGARGQDAEGKRAPLVFSGKRRAPGARGRCAPDHFQEDHLLQKEKEVSSSHMVSEGGPRGAFHKGSATKPAGCQSSSKDRSAASTPSKALKFPVHPRKAVGSLAPGELARGTENGMKPATPKAKPGPSSQGSGSPRPGTKTGGGSQPQPASGQLQSETATTPAKPSFPSRSPAPERLPARAQAKSCTKGPREAGEQGPHGSLGPKEKGESSTKRKKGQVPGPARSESVGSFGRAPSAPDKPPRTPRKQATPSRVLPTKPKPNSQNKPRPPPSEQRKAEPGHTQRKDRLGKAFPQGRPLLRPPKRGTAVHGAEPAEPHTHRTAEAQSDLLSQLFGQRLTGFKIPLKKDASE.

Disordered stretches follow at residues 1–274, 313–465, 512–672, 763–784, 869–1383, 1400–1461, 1575–1610, 1703–1864, 1884–1947, 1991–2030, 2070–2700, 2716–2915, 3001–3036, and 3072–3110; these read MPGE…VSFQ, WPEE…MFFN, EWQG…FPFP, GHQR…RVPA, ADEE…HSEL, PKPS…DLPV, LQRS…SQRR, SKTG…GASS, VSNT…TVEG, KTQG…TGPT, LTAA…TLGP, AGET…LSDS, EMPA…PGNT, and GPSF…PAKG. The segment covering 187-198 has biased composition (polar residues); that stretch reads PPSSFTSTNYTS. 2 stretches are compositionally biased toward pro residues: residues 202–211 and 324–335; these read TPRPPAPGPP and YPLPTQPAPSPL. Residues 603 to 623 are compositionally biased toward low complexity; the sequence is STCSSLSPMSSSPANPSSEES. 2 stretches are compositionally biased toward pro residues: residues 768–780 and 896–911; these read PGPP…PAAP and KAPP…PQTP. Basic residues predominate over residues 944–953; that stretch reads QQRRGKQLKL. The span at 963 to 975 shows a compositional bias: gly residues; it reads AAEGSGSGGGGRA. Residues 981-991 are compositionally biased toward basic and acidic residues; it reads RRNDGLGERPP. The span at 1005–1017 shows a compositional bias: low complexity; sequence RADPAPRVPRAAA. Composition is skewed to basic residues over residues 1025-1042 and 1058-1070; these read SRRR…RKAR and KNRR…RRAG. Residues 1082-1093 show a composition bias toward basic and acidic residues; sequence PGAEDRRLREYD. Residues 1094-1103 are compositionally biased toward acidic residues; sequence FASESEEDEQ. Residues 1120 to 1137 show a composition bias toward basic and acidic residues; the sequence is KRKEVELTQGPREDEPQK. The span at 1158 to 1177 shows a compositional bias: low complexity; sequence PGGSRPGPGRSPQARGPSRS. The span at 1213 to 1229 shows a compositional bias: basic and acidic residues; it reads EETRPSLDFPQEAKEPE. Polar residues-rich tracts occupy residues 1278-1290 and 1333-1350; these read PKPS…TAPH and NPSS…SKIS. Residues 1577–1595 show a composition bias toward basic and acidic residues; that stretch reads RSKDTRGAPRELAEAESVG. 2 stretches are compositionally biased toward polar residues: residues 1991-2005 and 2014-2024; these read KTQG…QPEN and NHASVNASPKT. A compositionally biased stretch (basic and acidic residues) spans 2243–2262; the sequence is DTPKDSTLRIPEDSRKEKLW. Positions 2409-2435 are enriched in polar residues; that stretch reads TAPSSTASDFQSDSPQSHRNASHQTPQ. The segment at 2472-2498 adopts a C2H2-type 1 zinc-finger fold; that stretch reads VTCEVCAASFRSGPGLSRHKARKHRPH. The segment covering 2488-2498 has biased composition (basic residues); that stretch reads SRHKARKHRPH. The segment covering 2506–2521 has biased composition (low complexity); that stretch reads SPAALPAQQPLEPLAQ. A compositionally biased stretch (basic and acidic residues) spans 2534 to 2546; it reads SGKERPNHSRGDP. Over residues 2565-2574 the composition is skewed to low complexity; it reads PGSPHSQQLH. A compositionally biased stretch (basic and acidic residues) spans 2592 to 2631; that stretch reads PRPDQAREDELHPKQAEKREGRRWRREPTVDSPSHSEGKS. A compositionally biased stretch (basic residues) spans 2632-2642; the sequence is NKKRGKLRGRR. Residues 2664–2676 are compositionally biased toward low complexity; sequence PSPAMASYAASPS. Residues 2777 to 2787 show a composition bias toward basic and acidic residues; sequence DSSRAHSRSEE. The segment covering 2805-2816 has biased composition (low complexity); sequence TSSSPADSTTSS. The span at 2869–2879 shows a compositional bias: basic residues; it reads LTRKRNPHVYG. The segment covering 3095-3105 has biased composition (low complexity); that stretch reads AAGAGRAQGRG. The segment at 3115–3137 adopts a C2H2-type 2 zinc-finger fold; sequence YKCKVCFQRFRSLGELDLHKLAH. Residues 3232–3322 are disordered; that stretch reads TEPAPKHHRG…PDPWAGGEPL (91 aa). Residues 3260–3272 are compositionally biased toward basic and acidic residues; that stretch reads GEAKKDSPGERAK. Residues 3302 to 3314 show a composition bias toward pro residues; that stretch reads PGPPRTTPSPSPD. 2 consecutive C2H2-type zinc fingers follow at residues 3337–3359 and 3365–3388; these read RDCH…LAVH and YLCP…GGAH. Residues 3418–3442 form a C2H2-type 5; degenerate zinc finger; sequence FACSSCNYTFAKKEQFDRHMNKHLR. Disordered regions lie at residues 3448–3501, 3518–3559, and 3576–3925; these read FAFR…PILS, STTK…SPFP, and ERPE…HRTA. The segment covering 3584 to 3602 has biased composition (low complexity); it reads PGSPGPLLQQALPLGASLP. The segment covering 3633–3651 has biased composition (basic and acidic residues); the sequence is CAPDHFQEDHLLQKEKEVS. Low complexity-rich tracts occupy residues 3728-3741 and 3749-3759; these read PGPS…PRPG and QPQPASGQLQS. Basic and acidic residues-rich tracts occupy residues 3876–3892 and 3915–3925; these read EQRK…DRLG and EPAEPHTHRTA.

Belongs to the krueppel C2H2-type zinc-finger protein family. Detected in cornea, sclera, skin fibroblasts and striated muscle.

It is found in the nucleus. May be involved in transcriptional regulation. The chain is Zinc finger protein 469 (ZNF469) from Homo sapiens (Human).